A 347-amino-acid chain; its full sequence is Protein RecA (347 aa).

67–74 lines the ATP pocket; it reads GPESSGKT.

Belongs to the RecA family.

It is found in the cytoplasm. In terms of biological role, can catalyze the hydrolysis of ATP in the presence of single-stranded DNA, the ATP-dependent uptake of single-stranded DNA by duplex DNA, and the ATP-dependent hybridization of homologous single-stranded DNAs. It interacts with LexA causing its activation and leading to its autocatalytic cleavage. The polypeptide is Protein RecA (Paenarthrobacter aurescens (strain TC1)).